We begin with the raw amino-acid sequence, 299 residues long: NAD kinase (299 aa).

Residue aspartate 64 is the Proton acceptor of the active site. NAD(+) contacts are provided by residues 64-65 (DG), 138-139 (ND), arginine 149, arginine 166, aspartate 168, 179-184 (TGYAVS), and glutamine 238.

The protein belongs to the NAD kinase family. A divalent metal cation is required as a cofactor.

It is found in the cytoplasm. The enzyme catalyses NAD(+) + ATP = ADP + NADP(+) + H(+). Functionally, involved in the regulation of the intracellular balance of NAD and NADP, and is a key enzyme in the biosynthesis of NADP. Catalyzes specifically the phosphorylation on 2'-hydroxyl of the adenosine moiety of NAD to yield NADP. The chain is NAD kinase from Nitratidesulfovibrio vulgaris (strain ATCC 29579 / DSM 644 / CCUG 34227 / NCIMB 8303 / VKM B-1760 / Hildenborough) (Desulfovibrio vulgaris).